The chain runs to 708 residues: DNA-directed RNA polymerase III subunit RPC5 (708 aa).

Residues 146-155 (DAKHREREAA) are compositionally biased toward basic and acidic residues. A disordered region spans residues 146-170 (DAKHREREAANEAGDSSQDEAEDDV). Phosphoserine occurs at positions 161 and 162. Lys-171 participates in a covalent cross-link: Glycyl lysine isopeptide (Lys-Gly) (interchain with G-Cter in SUMO2). Phosphoserine is present on Ser-192. Tyr-224 is modified (phosphotyrosine). Residue Lys-432 forms a Glycyl lysine isopeptide (Lys-Gly) (interchain with G-Cter in SUMO2) linkage. Positions 485 to 552 (QLRVPAVPPG…DSFNGHPPQG (68 aa)) are disordered. Lys-498 is covalently cross-linked (Glycyl lysine isopeptide (Lys-Gly) (interchain with G-Cter in SUMO1); alternate). Lys-498 participates in a covalent cross-link: Glycyl lysine isopeptide (Lys-Gly) (interchain with G-Cter in SUMO2); alternate. Residues 502 to 519 (VSEEGEEDEEQEAEEEPM) show a composition bias toward acidic residues. A phosphoserine mark is found at Ser-503 and Ser-522. Positions 556 to 708 (TPVARELKAF…MWYLKGTVQS (153 aa)) are required for Pol III complex stability. A Glycyl lysine isopeptide (Lys-Gly) (interchain with G-Cter in SUMO2) cross-link involves residue Lys-659.

Component of the RNA polymerase III complex consisting of at least 17 subunits: a ten-subunit horseshoe-shaped catalytic core composed of POLR3A/RPC1, POLR3B/RPC2, POLR1C/RPAC1, POLR1D/RPAC2, POLR3K/RPC10, POLR2E/RPABC1, POLR2F/RPABC2, POLR2H/RPABC3, POLR2K/RPABC4 and POLR2L/RPABC5; the stalk composed of two subunits POLR3H/RPC8 and CRCP/RPC9, forming a structural mobile part that protrudes out of the core and functions primarily in transcription initiation; and additional subunits homologous to general transcription factors of the RNA polymerase II machinery, POLR3D/RPC4-POLR3E/RPC5 heterodimer and POLR3/CRPC3-POLR3F/RPC6-POLR3G/RPC7 heterotrimer.

The protein localises to the nucleus. DNA-dependent RNA polymerase catalyzes the transcription of DNA into RNA using the four ribonucleoside triphosphates as substrates. Specific peripheric component of RNA polymerase III (Pol III) which synthesizes small non-coding RNAs including 5S rRNA, snRNAs, tRNAs and miRNAs from at least 500 distinct genomic loci. Assembles with POLR3D/RPC4 forming a subcomplex that binds the Pol III core. Enables recruitment of Pol III at transcription initiation site and drives transcription initiation from both type 2 and type 3 DNA promoters. Required for efficient transcription termination and reinitiation. Plays a key role in sensing and limiting infection by intracellular bacteria and DNA viruses. Acts as a nuclear and cytosolic DNA sensor involved in innate immune response. Can sense non-self dsDNA that serves as template for transcription into dsRNA. The non-self RNA polymerase III transcripts, such as Epstein-Barr virus-encoded RNAs (EBERs) induce type I interferon and NF-kappa-B through the RIG-I pathway. The sequence is that of DNA-directed RNA polymerase III subunit RPC5 from Homo sapiens (Human).